The chain runs to 478 residues: Cobyric acid synthase (478 aa).

A GATase cobBQ-type domain is found at Q250–H437. Residue C331 is the Nucleophile of the active site. H429 is an active-site residue.

The protein belongs to the CobB/CobQ family. CobQ subfamily.

The protein operates within cofactor biosynthesis; adenosylcobalamin biosynthesis. Functionally, catalyzes amidations at positions B, D, E, and G on adenosylcobyrinic A,C-diamide. NH(2) groups are provided by glutamine, and one molecule of ATP is hydrogenolyzed for each amidation. In Xanthomonas euvesicatoria pv. vesicatoria (strain 85-10) (Xanthomonas campestris pv. vesicatoria), this protein is Cobyric acid synthase.